The chain runs to 145 residues: Putative esterase PA1618 (145 aa).

The protein belongs to the thioesterase PaaI family.

In Pseudomonas aeruginosa (strain ATCC 15692 / DSM 22644 / CIP 104116 / JCM 14847 / LMG 12228 / 1C / PRS 101 / PAO1), this protein is Putative esterase PA1618.